Reading from the N-terminus, the 53-residue chain is Large ribosomal subunit protein bL33B (53 aa).

Belongs to the bacterial ribosomal protein bL33 family.

In Sorangium cellulosum (strain So ce56) (Polyangium cellulosum (strain So ce56)), this protein is Large ribosomal subunit protein bL33B.